Reading from the N-terminus, the 664-residue chain is DNA ligase (664 aa).

NAD(+) contacts are provided by residues 34–38, 83–84, and E114; these read DAEYD and SL. K116 acts as the N6-AMP-lysine intermediate in catalysis. Residues R137, E172, K288, and K312 each coordinate NAD(+). Zn(2+) contacts are provided by C406, C409, C424, and C429. The BRCT domain maps to 586 to 664; the sequence is VRDNRLEGLT…EEEFRQMVMS (79 aa).

This sequence belongs to the NAD-dependent DNA ligase family. LigA subfamily. Mg(2+) is required as a cofactor. Requires Mn(2+) as cofactor.

It carries out the reaction NAD(+) + (deoxyribonucleotide)n-3'-hydroxyl + 5'-phospho-(deoxyribonucleotide)m = (deoxyribonucleotide)n+m + AMP + beta-nicotinamide D-nucleotide.. DNA ligase that catalyzes the formation of phosphodiester linkages between 5'-phosphoryl and 3'-hydroxyl groups in double-stranded DNA using NAD as a coenzyme and as the energy source for the reaction. It is essential for DNA replication and repair of damaged DNA. The protein is DNA ligase of Carboxydothermus hydrogenoformans (strain ATCC BAA-161 / DSM 6008 / Z-2901).